A 153-amino-acid chain; its full sequence is Xanthine-guanine phosphoribosyltransferase (153 aa).

5-phospho-alpha-D-ribose 1-diphosphate contacts are provided by residues 37-38, Arg-69, and 88-96; these read RG and DDLVDTGGT. Arg-69 contributes to the GMP binding site. A Mg(2+)-binding site is contributed by Asp-89. Guanine is bound by residues Asp-92 and Ile-135. Residues Asp-92 and Ile-135 each contribute to the xanthine site. Residues 92 to 96 and 134 to 135 each bind GMP; these read DTGGT and WI.

Belongs to the purine/pyrimidine phosphoribosyltransferase family. XGPT subfamily. In terms of assembly, homotetramer. Mg(2+) is required as a cofactor.

It is found in the cell inner membrane. The enzyme catalyses GMP + diphosphate = guanine + 5-phospho-alpha-D-ribose 1-diphosphate. It carries out the reaction XMP + diphosphate = xanthine + 5-phospho-alpha-D-ribose 1-diphosphate. The catalysed reaction is IMP + diphosphate = hypoxanthine + 5-phospho-alpha-D-ribose 1-diphosphate. It functions in the pathway purine metabolism; GMP biosynthesis via salvage pathway; GMP from guanine: step 1/1. It participates in purine metabolism; XMP biosynthesis via salvage pathway; XMP from xanthine: step 1/1. Functionally, purine salvage pathway enzyme that catalyzes the transfer of the ribosyl-5-phosphate group from 5-phospho-alpha-D-ribose 1-diphosphate (PRPP) to the N9 position of the 6-oxopurines guanine and xanthine to form the corresponding ribonucleotides GMP (guanosine 5'-monophosphate) and XMP (xanthosine 5'-monophosphate), with the release of PPi. To a lesser extent, also acts on hypoxanthine. This chain is Xanthine-guanine phosphoribosyltransferase, found in Photorhabdus laumondii subsp. laumondii (strain DSM 15139 / CIP 105565 / TT01) (Photorhabdus luminescens subsp. laumondii).